A 456-amino-acid chain; its full sequence is Glycine receptor subunit alpha-4 (456 aa).

The signal sequence occupies residues 1–27 (MTTLVPASLFLLLWTLPGKVLLSVALA). At 28-256 (KEDVKSGLKG…KFHLERQMGY (229 aa)) the chain is on the extracellular side. Asn-71 carries N-linked (GlcNAc...) asparagine glycosylation. 2 cysteine pairs are disulfide-bonded: Cys-171–Cys-185 and Cys-232–Cys-243. 236–241 (YNTGKF) lines the strychnine pocket. A helical transmembrane segment spans residues 257–278 (YLIQMYIPSLLIVILSWVSFWI). Residues 279–283 (NMDAA) lie on the Cytoplasmic side of the membrane. The chain crosses the membrane as a helical span at residues 284–304 (PARVGLGITTVLTMTTQSSGS). Topologically, residues 305–315 (RASLPKVSYVK) are extracellular. A helical membrane pass occupies residues 316 to 336 (AIDIWMAVCLLFVFAALLEYA). Topologically, residues 337–423 (AVNFVSRQHK…YVDRAKRIDT (87 aa)) are cytoplasmic. The helical transmembrane segment at 424 to 444 (ISRAVFPFTFLVFNIFYWVVY) threads the bilayer. At 445-456 (KVLRSEDIHQAL) the chain is on the extracellular side.

This sequence belongs to the ligand-gated ion channel (TC 1.A.9) family. Glycine receptor (TC 1.A.9.3) subfamily. GLRA4 sub-subfamily. Homopentamer (in vitro). Heteropentamer composed of GLRA4 and GLRB. In terms of tissue distribution, detected in the retina inner plexiform layer, especially at the border between layer three and four (at protein level).

It is found in the postsynaptic cell membrane. The protein localises to the synapse. Its subcellular location is the perikaryon. The protein resides in the cell projection. It localises to the dendrite. It is found in the cell membrane. The catalysed reaction is chloride(in) = chloride(out). Inhibited by strychnine. Functionally, glycine receptors are ligand-gated chloride channels. Channel opening is triggered by extracellular glycine. Channel opening is also triggered by taurine and beta-alanine. Plays a role in the down-regulation of neuronal excitability. Contributes to the generation of inhibitory postsynaptic currents. The protein is Glycine receptor subunit alpha-4 (Glra4) of Mus musculus (Mouse).